The chain runs to 528 residues: MSVSRKDWSALSSLARQRTLEDEEEQERERRRRHRNLSSTTDDESPKLTQNGAQRSVERLPSVEEAEVSKPSPPASKDEDEDFQAILRTRKERRQRRQVVEAVQAPVQERPEAEEERDSLGPEQTSSQPLVPKKKVEALPRRRLSREQRGPWAQDEERLKNRELAEGEKRLPEETVAQQKTLVSEKTPVSEKTPVPAKRLVSEKACPSEKGTATEKASLTEKRHSPEKLVPEKTSVTEKSPVPEKTLVSLKTAAPERRSPPVLEKAIVSEKMQERKLVSEKASIFEKSLVSEAKLTPKKAAVSEQPQTTGGSQATTREPRGRALPDKSPPSSAEQSTPAPPTKASRFPPITLQVKIPSKDEDADTPSPTLLTYSSSLKRSSPRTISFRMSPRKDNSETPLTRSASVRLPASTVKLGEKLERYHTAIQRSESVRSPGSSRTEVLVTPAGVASKRHLFEKELSGQNRTEPTSIRKENLRLSGVVTSRLNLWISKTQDSGDHGSQEVRKEASVTKRAQWGSKPSTSLDAEV.

The segment at 1-404 is disordered; that stretch reads MSVSRKDWSA…NSETPLTRSA (404 aa). Phosphoserine occurs at positions 38, 56, 62, 72, and 76. Over residues 88-97 the composition is skewed to basic residues; it reads RTRKERRQRR. Ser119 carries the post-translational modification Phosphoserine. Basic and acidic residues predominate over residues 134 to 173; that stretch reads KKVEALPRRRLSREQRGPWAQDEERLKNRELAEGEKRLPE. SEK repeat units follow at residues 184 to 186, 190 to 192, 202 to 204, and 208 to 210; these read SEK. The 6 X SEK repeats stretch occupies residues 184–281; it reads SEKTPVSEKT…MQERKLVSEK (98 aa). 2 stretches are compositionally biased toward basic and acidic residues: residues 218-231 and 267-279; these read SLTE…KLVP and IVSE…KLVS. SEK repeat units follow at residues 269–271 and 279–281; these read SEK. Positions 304 to 316 are enriched in polar residues; that stretch reads EQPQTTGGSQATT. Residues Ser328, Ser358, Ser367, Ser405, and Ser496 each carry the phosphoserine modification. Low complexity predominate over residues 365–377; the sequence is TPSPTLLTYSSSL. The tract at residues 492 to 528 is disordered; that stretch reads KTQDSGDHGSQEVRKEASVTKRAQWGSKPSTSLDAEV. Residues 495–510 show a composition bias toward basic and acidic residues; the sequence is DSGDHGSQEVRKEASV. Over residues 518 to 528 the composition is skewed to polar residues; sequence SKPSTSLDAEV.

As to expression, expressed in kidney, lung and keratinocytes followed by liver, spleen and brain. Not expressed in testis, skeletal and heart muscle and in fibroblasts.

The protein resides in the secreted. Its subcellular location is the extracellular space. The protein localises to the extracellular matrix. It is found in the basement membrane. Anchoring filament protein which is a component of the basement membrane zone. In Mus musculus (Mouse), this protein is Ladinin-1 (Lad1).